A 340-amino-acid polypeptide reads, in one-letter code: Coproporphyrin III ferrochelatase (340 aa).

Residues Ser52 and Tyr121 each contribute to the Fe-coproporphyrin III site. Residues His181 and Glu264 each coordinate Fe(2+).

Belongs to the ferrochelatase family.

The protein resides in the cytoplasm. It catalyses the reaction Fe-coproporphyrin III + 2 H(+) = coproporphyrin III + Fe(2+). It functions in the pathway porphyrin-containing compound metabolism; protoheme biosynthesis. In terms of biological role, involved in coproporphyrin-dependent heme b biosynthesis. Catalyzes the insertion of ferrous iron into coproporphyrin III to form Fe-coproporphyrin III. This is Coproporphyrin III ferrochelatase from Mycolicibacterium smegmatis (strain ATCC 700084 / mc(2)155) (Mycobacterium smegmatis).